A 149-amino-acid chain; its full sequence is MQILVHCIQKKDDDFDNIKEYIKMSSKWADIKDINKFNSQIAKAQSASKEQAHKAYDLAYEHCLNGYCIGLDEKGYHLDSVEFADLLKNSSQISFFIGGAYGLSPQFKTKMNRLISLSKMTLAHKIAKLMLFEQIFRGLCINANHPYHK.

S-adenosyl-L-methionine-binding positions include Leu71, Gly98, and 117 to 122; that span reads LSKMTL.

The protein belongs to the RNA methyltransferase RlmH family. In terms of assembly, homodimer.

Its subcellular location is the cytoplasm. The catalysed reaction is pseudouridine(1915) in 23S rRNA + S-adenosyl-L-methionine = N(3)-methylpseudouridine(1915) in 23S rRNA + S-adenosyl-L-homocysteine + H(+). In terms of biological role, specifically methylates the pseudouridine at position 1915 (m3Psi1915) in 23S rRNA. In Campylobacter fetus subsp. fetus (strain 82-40), this protein is Ribosomal RNA large subunit methyltransferase H.